The sequence spans 258 residues: Spindlin-2A (258 aa).

The span at 1–23 (MKTPNAQEAEGQQTRAAAGRATG) shows a compositional bias: low complexity. Positions 1–49 (MKTPNAQEAEGQQTRAAAGRATGSANMTKKKVSQKKQRGRPSSQPRRNI) are disordered. A compositionally biased stretch (basic residues) spans 28–39 (TKKKVSQKKQRG). 3 tudor-like domain regions span residues 50 to 99 (VGCR…LELH), 129 to 178 (IGKA…YQLL), and 210 to 255 (IGKH…YDLV). Histone H3K4me3 and H3R8me2a binding regions lie at residues E138 and 246–248 (DFH).

It belongs to the SPIN/STSY family. As to quaternary structure, interacts with C11orf84/SPINDOC.

The protein resides in the nucleus. Its function is as follows. May be involved in the regulation of cell cycle progression. Exhibits H3K4me3-binding activity. This chain is Spindlin-2A (SPIN2A), found in Homo sapiens (Human).